We begin with the raw amino-acid sequence, 208 residues long: Probable GTP-binding protein EngB (208 aa).

The EngB-type G domain maps to 29 to 203; the sequence is EGREVAFAGR…WDKLGEWLGI (175 aa). GTP is bound by residues 37–44, 64–68, 82–85, 149–152, and 182–184; these read GRSNAGKS, GRTQL, DLPG, TKAD, and FSA. Residues S44 and T66 each contribute to the Mg(2+) site.

Belongs to the TRAFAC class TrmE-Era-EngA-EngB-Septin-like GTPase superfamily. EngB GTPase family. The cofactor is Mg(2+).

Its function is as follows. Necessary for normal cell division and for the maintenance of normal septation. In Alcanivorax borkumensis (strain ATCC 700651 / DSM 11573 / NCIMB 13689 / SK2), this protein is Probable GTP-binding protein EngB.